The primary structure comprises 312 residues: Olfactory receptor 6C1 (312 aa).

The Extracellular portion of the chain corresponds to 1 to 23; sequence MRNHTEITEFILLGLTDDPNFQV. Asparagine 3 carries N-linked (GlcNAc...) asparagine glycosylation. A helical transmembrane segment spans residues 24–44; that stretch reads VIFVFLLITYMLSITGNLTLI. At 45 to 52 the chain is on the cytoplasmic side; that stretch reads TITLLDSH. The chain crosses the membrane as a helical span at residues 53-73; the sequence is LQTPMYFFLRNFSILEISFTT. Residues 74–97 lie on the Extracellular side of the membrane; that stretch reads VSIPKFLGNIISGDKTISFNNCIV. A disulfide bridge links cysteine 95 with cysteine 187. A helical transmembrane segment spans residues 98–118; it reads QLFFFILLGVTEFYLLAAMSY. At 119 to 137 the chain is on the cytoplasmic side; sequence DRYVAICKPLHCLSIMNRR. Residues 138 to 158 traverse the membrane as a helical segment; sequence VCTLLVFTSWLVSFLIIFPAL. Over 159 to 195 the chain is Extracellular; it reads MLLLKLHYCRSNIIDHFTCDYFPLLQLACSDTKFLEV. Residues 196 to 215 form a helical membrane-spanning segment; the sequence is MGFSCAAFTLMFTLALIFLS. The Cytoplasmic portion of the chain corresponds to 216–235; that stretch reads YIYIIRTILRIPSTSQRTKA. Residues 236 to 256 traverse the membrane as a helical segment; sequence FSTCSSHMVVVSISYGSCIFM. Topologically, residues 257–269 are extracellular; sequence YIKPSAKDRVSLS. A helical membrane pass occupies residues 270 to 290; it reads KGVAILNTSVAPMMNPFIYSL. Residues 291 to 312 are Cytoplasmic-facing; it reads RNQQVKQAFINMARKTVFFTST.

The protein belongs to the G-protein coupled receptor 1 family.

It localises to the cell membrane. Odorant receptor. In Homo sapiens (Human), this protein is Olfactory receptor 6C1 (OR6C1).